The sequence spans 355 residues: Putative GPI-anchor transamidase (355 aa).

Positions methionine 1–alanine 24 are cleaved as a signal peptide. Residues histidine 165 and cysteine 207 contribute to the active site.

It belongs to the peptidase C13 family.

It functions in the pathway glycolipid biosynthesis; glycosylphosphatidylinositol-anchor biosynthesis. Mediates GPI anchoring in the endoplasmic reticulum, by replacing a protein's C-terminal GPI attachment signal peptide with a pre-assembled GPI. During this transamidation reaction, the GPI transamidase forms a carbonyl intermediate with the substrate protein. This is Putative GPI-anchor transamidase from Drosophila melanogaster (Fruit fly).